We begin with the raw amino-acid sequence, 235 residues long: Small ribosomal subunit protein eS4 (235 aa).

The S4 RNA-binding domain occupies Val38 to Asn99.

The protein belongs to the eukaryotic ribosomal protein eS4 family.

This is Small ribosomal subunit protein eS4 (rps4e) from Thermoplasma volcanium (strain ATCC 51530 / DSM 4299 / JCM 9571 / NBRC 15438 / GSS1).